A 318-amino-acid chain; its full sequence is HTH-type transcriptional regulatory protein TyrR (318 aa).

The 225-residue stretch at 15 to 239 folds into the Sigma-54 factor interaction; truncated domain; that stretch reads FIVQSEAMKS…LYNTLYRACS (225 aa). Residues 43–50 and 101–110 contribute to the ATP site; these read GETGSGKD and ANKGTVLLDG. A DNA-binding region (H-T-H motif) is located at residues 292–312; that stretch reads STRKLAQRLGVSHTAIANKLK.

In terms of assembly, homodimer. In presence of tyrosine (or high concentrations of phenylalanine or tryptophan) and ATP, it self-associates to form a hexamer.

The protein localises to the cytoplasm. Its activity is regulated as follows. The DNA binding ability is drastically reduced in the presence of ATP. Tyrosine further reduces the binding affinity of TyrR in the presence of ATP. Transcriptional regulator of the TyrR regulon, which includes a number of genes coding for proteins involved in the biosynthesis or transport of the three aromatic amino acids, phenylalanine, tyrosine and tryptophan. These three aromatic amino acids act as effectors which bind to the TyrR protein to form an active regulatory protein. Acts by binding specifically to TyrR boxes in the promoter region of the target genes. Can efficiently repress the transcription of the aroF promoter, but lacks the ability to function as a transcriptional activator. This Haemophilus influenzae (strain ATCC 51907 / DSM 11121 / KW20 / Rd) protein is HTH-type transcriptional regulatory protein TyrR.